The sequence spans 562 residues: Phosphoenolpyruvate carboxykinase (ATP) (562 aa).

An ATP-binding site is contributed by 265 to 272 (GLSGTGKT).

This sequence belongs to the phosphoenolpyruvate carboxykinase (ATP) family.

The enzyme catalyses oxaloacetate + ATP = phosphoenolpyruvate + ADP + CO2. It participates in carbohydrate biosynthesis; gluconeogenesis. This chain is Phosphoenolpyruvate carboxykinase (ATP) (pckA), found in Dictyostelium discoideum (Social amoeba).